We begin with the raw amino-acid sequence, 307 residues long: OTU domain-containing protein 2 (307 aa).

2 disordered regions span residues 23 to 46 (ENKDLQNKITGMKKQATKSKRKEV) and 96 to 130 (SRDEKEQQNVPVQQQQQGQTKKRRNRQKERLAKRD). Residues 103–114 (QNVPVQQQQQGQ) are compositionally biased toward low complexity. The 141-residue stretch at 167–307 (LKQFDIQPDG…GEHYNSLHDS (141 aa)) folds into the OTU domain.

The polypeptide is OTU domain-containing protein 2 (OTU2) (Saccharomyces cerevisiae (strain ATCC 204508 / S288c) (Baker's yeast)).